We begin with the raw amino-acid sequence, 357 residues long: NADH-quinone oxidoreductase subunit H (357 aa).

The next 8 helical transmembrane spans lie at 25–45 (ILIILIKAITLVIPLMLVVAY), 94–114 (IYLFLLAPVLAIAPAIAVWVV), 130–150 (LLYVLAIGSIGVYGIILAGWA), 166–186 (LLVSYEIVIGFALATVVMIAG), 201–221 (IIYWNFIPLFPMMIIFFISAL), 254–274 (FFLAEYANMILMAVLAVVMFF), 294–314 (VPGIIWLLAKTTFFMFLYLWV), and 329–349 (LSWKVFLPITIIWIFVVALMT).

It belongs to the complex I subunit 1 family. NDH-1 is composed of 14 different subunits. Subunits NuoA, H, J, K, L, M, N constitute the membrane sector of the complex.

It is found in the cell inner membrane. It carries out the reaction a quinone + NADH + 5 H(+)(in) = a quinol + NAD(+) + 4 H(+)(out). NDH-1 shuttles electrons from NADH, via FMN and iron-sulfur (Fe-S) centers, to quinones in the respiratory chain. The immediate electron acceptor for the enzyme in this species is believed to be ubiquinone. Couples the redox reaction to proton translocation (for every two electrons transferred, four hydrogen ions are translocated across the cytoplasmic membrane), and thus conserves the redox energy in a proton gradient. This subunit may bind ubiquinone. The polypeptide is NADH-quinone oxidoreductase subunit H (Ruthia magnifica subsp. Calyptogena magnifica).